The sequence spans 518 residues: Nuclear receptor ROR-gamma (518 aa).

The segment at 1 to 30 (MDRAPQRQHQASRELLAAKKTHTSQIEVIP) is modulating. 2 NR C4-type zinc fingers span residues 31–51 (CKIC…CEGC) and 67–91 (CTRQ…LQKC). Residues 31–96 (CKICGDKSSG…RLQKCLALGM (66 aa)) constitute a DNA-binding region (nuclear receptor). Disordered regions lie at residues 105-183 (RMSK…SGSG) and 238-258 (HPGL…SFRS). Residues 109–118 (KQRDSLHAEV) show a composition bias toward basic and acidic residues. Low complexity predominate over residues 119 to 130 (QKQLQQRQQQQQ). The region spanning 269–508 (EIEHLVQSVC…PPLYKELFST (240 aa)) is the NR LBD domain. The AF-2 motif lies at 501 to 506 (LYKELF).

Belongs to the nuclear hormone receptor family. NR1 subfamily. As to quaternary structure, interacts (via AF-2 motif) with the coactivators NCOA1, NCOA2 and PPARGC1A (via LXXLL motif). Interacts with the corepressor NCOR1. Interacts with CRY1. Interacts (via AF-2 motif) with PROX1. Interacts with FOXP3. Interacts with NR0B2.

It is found in the nucleus. Nuclear receptor that binds DNA as a monomer to ROR response elements (RORE) containing a single core motif half-site 5'-AGGTCA-3' preceded by a short A-T-rich sequence. Key regulator of cellular differentiation, immunity, peripheral circadian rhythm as well as lipid, steroid, xenobiotics and glucose metabolism. Considered to have intrinsic transcriptional activity, have some natural ligands like oxysterols that act as agonists (25-hydroxycholesterol) or inverse agonists (7-oxygenated sterols), enhancing or repressing the transcriptional activity, respectively. Recruits distinct combinations of cofactors to target gene regulatory regions to modulate their transcriptional expression, depending on the tissue, time and promoter contexts. Regulates the circadian expression of clock genes such as CRY1, BMAL1 and NR1D1 in peripheral tissues and in a tissue-selective manner. Competes with NR1D1 for binding to their shared DNA response element on some clock genes such as BMAL1, CRY1 and NR1D1 itself, resulting in NR1D1-mediated repression or RORC-mediated activation of the expression, leading to the circadian pattern of clock genes expression. Therefore influences the period length and stability of the clock. Involved in the regulation of the rhythmic expression of genes involved in glucose and lipid metabolism, including PLIN2 and AVPR1A. Negative regulator of adipocyte differentiation through the regulation of early phase genes expression, such as MMP3. Controls adipogenesis as well as adipocyte size and modulates insulin sensitivity in obesity. In liver, has specific and redundant functions with RORA as positive or negative modulator of expression of genes encoding phase I and Phase II proteins involved in the metabolism of lipids, steroids and xenobiotics, such as SULT1E1. Also plays a role in the regulation of hepatocyte glucose metabolism through the regulation of G6PC1 and PCK1. Essential for thymopoiesis and the development of several secondary lymphoid tissues, including lymph nodes and Peyer's patches. Required for the generation of LTi (lymphoid tissue inducer) cells. Regulates thymocyte survival through DNA-binding on ROREs of target gene promoter regions and recruitment of coactivaros via the AF-2. Also plays a key role, downstream of IL6 and TGFB and synergistically with RORA, for lineage specification of uncommitted CD4(+) T-helper (T(H)) cells into T(H)17 cells, antagonizing the T(H)1 program. Probably regulates IL17 and IL17F expression on T(H) by binding to the essential enhancer conserved non-coding sequence 2 (CNS2) in the IL17-IL17F locus. May also play a role in the pre-TCR activation cascade leading to the maturation of alpha/beta T-cells and may participate in the regulation of DNA accessibility in the TCR-J(alpha) locus. Regulates the rhythmic expression of PROX1 and promotes its nuclear localization. Plays an indispensable role in the induction of IFN-gamma dependent anti-mycobacterial systemic immunity. This is Nuclear receptor ROR-gamma (RORC) from Pongo abelii (Sumatran orangutan).